The primary structure comprises 86 residues: uncharacterized protein (86 aa).

Residues 63-85 (VGGRSPSIQNSFFFFFFFFFFFF) form a helical membrane-spanning segment.

Its subcellular location is the membrane. This is an uncharacterized protein from Dictyostelium discoideum (Social amoeba).